The chain runs to 492 residues: N-succinylglutamate 5-semialdehyde dehydrogenase (492 aa).

220 to 225 serves as a coordination point for NAD(+); the sequence is GRANTG. Residues Glu243 and Cys277 contribute to the active site.

It belongs to the aldehyde dehydrogenase family. AstD subfamily.

It catalyses the reaction N-succinyl-L-glutamate 5-semialdehyde + NAD(+) + H2O = N-succinyl-L-glutamate + NADH + 2 H(+). Its pathway is amino-acid degradation; L-arginine degradation via AST pathway; L-glutamate and succinate from L-arginine: step 4/5. In terms of biological role, catalyzes the NAD-dependent reduction of succinylglutamate semialdehyde into succinylglutamate. This is N-succinylglutamate 5-semialdehyde dehydrogenase from Shigella boydii serotype 4 (strain Sb227).